The chain runs to 422 residues: Probable tRNA pseudouridine synthase D 2 (422 aa).

The Nucleophile role is filled by aspartate 89. Residues 160 to 371 enclose the TRUD domain; it reads GAPNYFDSQR…IYSERKILSI (212 aa).

The protein belongs to the pseudouridine synthase TruD family.

It carries out the reaction uridine(13) in tRNA = pseudouridine(13) in tRNA. Functionally, could be responsible for synthesis of pseudouridine from uracil-13 in transfer RNAs. This Methanocaldococcus jannaschii (strain ATCC 43067 / DSM 2661 / JAL-1 / JCM 10045 / NBRC 100440) (Methanococcus jannaschii) protein is Probable tRNA pseudouridine synthase D 2.